The following is a 115-amino-acid chain: U3-lycotoxin-Ls1i (115 aa).

The N-terminal stretch at 1–20 (MKFVLLFGVFLVTLFSYSSA) is a signal peptide. The propeptide occupies 21–44 (EMLDDFDQADEDELLSLIEKEEAR). 4 disulfide bridges follow: Cys48–Cys63, Cys55–Cys72, Cys62–Cys87, and Cys74–Cys85.

It belongs to the neurotoxin 19 (CSTX) family. 01 subfamily. As to expression, expressed by the venom gland.

It localises to the secreted. In Lycosa singoriensis (Wolf spider), this protein is U3-lycotoxin-Ls1i.